Consider the following 526-residue polypeptide: ATP synthase subunit alpha (526 aa).

An ATP-binding site is contributed by 171–178 (GDRQVGKT).

This sequence belongs to the ATPase alpha/beta chains family. In terms of assembly, F-type ATPases have 2 components, CF(1) - the catalytic core - and CF(0) - the membrane proton channel. CF(1) has five subunits: alpha(3), beta(3), gamma(1), delta(1), epsilon(1). CF(0) has three main subunits: a(1), b(2) and c(9-12). The alpha and beta chains form an alternating ring which encloses part of the gamma chain. CF(1) is attached to CF(0) by a central stalk formed by the gamma and epsilon chains, while a peripheral stalk is formed by the delta and b chains.

The protein localises to the cell inner membrane. It carries out the reaction ATP + H2O + 4 H(+)(in) = ADP + phosphate + 5 H(+)(out). Produces ATP from ADP in the presence of a proton gradient across the membrane. The alpha chain is a regulatory subunit. This is ATP synthase subunit alpha from Azobacteroides pseudotrichonymphae genomovar. CFP2.